Consider the following 91-residue polypeptide: Defensin-like protein 220 (91 aa).

An N-terminal signal peptide occupies residues 1–19; the sequence is MKTIFFFITFIVLVSSCTS. 3 disulfides stabilise this stretch: cysteine 61/cysteine 78, cysteine 64/cysteine 83, and cysteine 68/cysteine 85.

The protein belongs to the DEFL family.

It localises to the secreted. This Arabidopsis thaliana (Mouse-ear cress) protein is Defensin-like protein 220.